Consider the following 129-residue polypeptide: Bacteriohemerythrin (129 aa).

Fe cation contacts are provided by His-19, His-59, Glu-63, His-78, His-82, His-119, and Asp-124.

It belongs to the hemerythrin family. Monomer.

Functionally, oxygen-binding protein. May be involved in a storage mechanism or for delivery to oxygen-requiring enzymes. The oxygen-binding site contains two iron atoms. This chain is Bacteriohemerythrin, found in Clostridium acetobutylicum (strain ATCC 824 / DSM 792 / JCM 1419 / IAM 19013 / LMG 5710 / NBRC 13948 / NRRL B-527 / VKM B-1787 / 2291 / W).